Consider the following 181-residue polypeptide: UPF0302 protein lin2035 (181 aa).

The protein belongs to the UPF0302 family.

The sequence is that of UPF0302 protein lin2035 from Listeria innocua serovar 6a (strain ATCC BAA-680 / CLIP 11262).